The chain runs to 471 residues: Exoglucanase 2 (471 aa).

The signal sequence occupies residues 1–18 (MIVGILTTLATLATLAAS). The propeptide occupies 19–24 (VPLEER). At Gln-25 the chain carries Pyrrolidone carboxylic acid. The CBM1 domain maps to 26–62 (ACSSVWGQCGGQNWSGPTCCASGSTCVYSNDYYSQCL). A compositionally biased stretch (low complexity) spans 64–101 (GAASSSSSTRAASTTSRVSPTTSRSSSATPPPGSTTTR). The disordered stretch occupies residues 64–108 (GAASSSSSTRAASTTSRVSPTTSRSSSATPPPGSTTTRVPPVGSG). A linker region spans residues 66–106 (ASSSSSTRAASTTSRVSPTTSRSSSATPPPGSTTTRVPPVG). The interval 107-471 (SGTATYSGNP…LLTNANPSFL (365 aa)) is catalytic. 2 O-linked (Man...) threonine glycosylation sites follow: Thr-111 and Thr-121. 4 O-linked (Man...) serine glycosylation sites follow: Ser-130, Ser-133, Ser-134, and Ser-139. O-linked (Man...) threonine glycosylation occurs at Thr-146. Cys-200 and Cys-259 are disulfide-bonded. Residue Asp-245 is the Proton donor of the active site. Asn-313 carries N-linked (GlcNAc) asparagine glycosylation. Asn-334 carries an N-linked (GlcNAc...) (high mannose) asparagine glycan. A disulfide bond links Cys-392 and Cys-439.

This sequence belongs to the glycosyl hydrolase 6 (cellulase B) family. Asn-334 contains mainly a high-mannose-type glycan (Hex(7-9)GlcNAc(2)) in a 3:1 ration with a single GlcNAc. Asn-313 was primarily unglycosylated with a small fraction (18%) bearing a single GlcNAc at this site.

The protein localises to the secreted. The enzyme catalyses Hydrolysis of (1-&gt;4)-beta-D-glucosidic linkages in cellulose and cellotetraose, releasing cellobiose from the non-reducing ends of the chains.. Exocellobiohydrolases (CBH) that catalyzes the hydrolysis of 1,4-beta-D-glucosidic bonds in cellulose to release the disaccharide cellobiose. The degradation of cellulose involves an interplay between different cellulolytic enzymes. Hydrolysis starts with endoglucanases (EGs), which cut internal beta-1,4-glucosidic bonds in cellulose to reduce the polymerization degree of the substrate and create new chain ends for exocellobiohydrolases (CBHs). The CBHs release the disaccharide cellobiose from the non-reducing end of the cellulose polymer chain. Finally, beta-1,4-glucosidases hydrolyze the cellobiose and other short cello-oligosaccharides into glucose units. The protein is Exoglucanase 2 (cbh2) of Hypocrea jecorina (Trichoderma reesei).